The following is a 148-amino-acid chain: PTS system fructose-like EIIA component (148 aa).

The PTS EIIA type-2 domain occupies 2–145; it reads AALTASCIDL…DQVLALLNQT (144 aa). Catalysis depends on H64, which acts as the Tele-phosphohistidine intermediate. H64 bears the Phosphohistidine; by HPr mark.

The protein resides in the cytoplasm. Its function is as follows. The phosphoenolpyruvate-dependent sugar phosphotransferase system (sugar PTS), a major carbohydrate active transport system, catalyzes the phosphorylation of incoming sugar substrates concomitantly with their translocation across the cell membrane. The enzyme II FrvAB PTS system is involved in fructose transport. This chain is PTS system fructose-like EIIA component, found in Escherichia coli (strain K12).